The following is a 406-amino-acid chain: Coenzyme A biosynthesis bifunctional protein CoaBC (406 aa).

Residues 2–190 (SLAGKKIVLG…SPVNDLKHLN (189 aa)) are phosphopantothenoylcysteine decarboxylase. Residue C158 is the Proton donor of the active site. Residues 191–406 (IMITAGPTRE…VTRYDEKNRR (216 aa)) form a phosphopantothenate--cysteine ligase region. Residues 273–275 (GCA), D279, K289, 308–311 (PDIV), F327, K341, and K345 contribute to the CTP site.

It in the N-terminal section; belongs to the HFCD (homo-oligomeric flavin containing Cys decarboxylase) superfamily. This sequence in the C-terminal section; belongs to the PPC synthetase family. Requires Mg(2+) as cofactor. FMN is required as a cofactor.

The catalysed reaction is N-[(R)-4-phosphopantothenoyl]-L-cysteine + H(+) = (R)-4'-phosphopantetheine + CO2. It catalyses the reaction (R)-4'-phosphopantothenate + L-cysteine + CTP = N-[(R)-4-phosphopantothenoyl]-L-cysteine + CMP + diphosphate + H(+). It functions in the pathway cofactor biosynthesis; coenzyme A biosynthesis; CoA from (R)-pantothenate: step 2/5. Its pathway is cofactor biosynthesis; coenzyme A biosynthesis; CoA from (R)-pantothenate: step 3/5. Functionally, catalyzes two sequential steps in the biosynthesis of coenzyme A. In the first step cysteine is conjugated to 4'-phosphopantothenate to form 4-phosphopantothenoylcysteine. In the second step the latter compound is decarboxylated to form 4'-phosphopantotheine. This is Coenzyme A biosynthesis bifunctional protein CoaBC from Escherichia coli O6:H1 (strain CFT073 / ATCC 700928 / UPEC).